A 519-amino-acid chain; its full sequence is MMRSLHSLRRMSGTVLALMLAAGLPLSAAQAQPAKPAPKGDQKPATPAPSEQFVDGIAAIVNKDVITLREVREASKLASADLQKRGIQVPDERTLQKQVLQRLIMERLERQEVDRMGIRVDEAQVDQAINMIASRNKITPAAMRAEIEKSGVTWEQYRKSLRDDIRMDRLRQRAVDANIIISDAEVDAFLKDQERNPAAAQATRAPAPQQPQPQPRQPAQSGPAMLVLAQILVRVPEGSSPDQVAALRKKAEGLLARAKKGDDFASLAAANSDGPEALQGGMMGARPLDGWPDLFVKAAGSLSAGQVSGLVQSGNGFHILKVVDRAGGGQPAQAARPAPAPAPQQPSSFQEGPSVAAPQGPVRVTQTHARHILIKTSTVMTDDQARQRLEQIRERLQGGAVKFEDMARQYSQDSTAPQGGDLGWVNPGDTVPPFEAAMNALQPNEISPPVLSPFGWHLIQVLERREHDVSDEVQRMRARQLLFERRAVPAFEDWLEQLRSQAFIDNRLEKQERLEQNNR.

A signal peptide spans 1–31; that stretch reads MMRSLHSLRRMSGTVLALMLAAGLPLSAAQA. Composition is skewed to low complexity over residues 31–45 and 197–207; these read AQPA…QKPA and PAAAQATRAPA. Disordered stretches follow at residues 31-50 and 196-221; these read AQPA…PAPS and NPAA…PAQS. The 102-residue stretch at 223 to 324 folds into the PpiC 1 domain; it reads PAMLVLAQIL…NGFHILKVVD (102 aa). The segment at 328 to 361 is disordered; sequence GGQPAQAARPAPAPAPQQPSSFQEGPSVAAPQGP. Residues 364–463 form the PpiC 2 domain; sequence VTQTHARHIL…FGWHLIQVLE (100 aa).

It localises to the periplasm. The catalysed reaction is [protein]-peptidylproline (omega=180) = [protein]-peptidylproline (omega=0). In terms of biological role, chaperone involved in the correct folding and assembly of outer membrane proteins. Recognizes specific patterns of aromatic residues and the orientation of their side chains, which are found more frequently in integral outer membrane proteins. May act in both early periplasmic and late outer membrane-associated steps of protein maturation. In Bordetella parapertussis (strain 12822 / ATCC BAA-587 / NCTC 13253), this protein is Chaperone SurA.